The primary structure comprises 648 residues: Biosynthetic arginine decarboxylase (648 aa).

K109 is subject to N6-(pyridoxal phosphate)lysine. 291-301 (IDVGGGLGIDF) serves as a coordination point for substrate.

Belongs to the Orn/Lys/Arg decarboxylase class-II family. SpeA subfamily. The cofactor is Mg(2+). Pyridoxal 5'-phosphate serves as cofactor.

The enzyme catalyses L-arginine + H(+) = agmatine + CO2. It functions in the pathway amine and polyamine biosynthesis; agmatine biosynthesis; agmatine from L-arginine: step 1/1. Functionally, catalyzes the biosynthesis of agmatine from arginine. This chain is Biosynthetic arginine decarboxylase, found in Prochlorococcus marinus (strain AS9601).